Here is a 198-residue protein sequence, read N- to C-terminus: Iron-sulfur flavoprotein MJ0731 (198 aa).

[4Fe-4S] cluster contacts are provided by Cys46, Cys49, Cys52, and Cys59.

It belongs to the SsuE family. Isf subfamily. In terms of assembly, homodimer. FMN is required as a cofactor. Requires [4Fe-4S] cluster as cofactor.

Redox-active protein probably involved in electron transport. The sequence is that of Iron-sulfur flavoprotein MJ0731 from Methanocaldococcus jannaschii (strain ATCC 43067 / DSM 2661 / JAL-1 / JCM 10045 / NBRC 100440) (Methanococcus jannaschii).